Reading from the N-terminus, the 248-residue chain is Large ribosomal subunit protein uL30A (248 aa).

The tract at residues M1–K44 is disordered. Over residues I8–A41 the composition is skewed to basic and acidic residues.

This sequence belongs to the universal ribosomal protein uL30 family.

Functionally, binds to G-rich structures in 28S rRNA and in mRNAs. Plays a regulatory role in the translation apparatus; inhibits cell-free translation of mRNAs. The chain is Large ribosomal subunit protein uL30A (Rpl7-1) from Paramecium tetraurelia.